Reading from the N-terminus, the 323-residue chain is Pantothenate kinase (323 aa).

Position 101-108 (101-108) interacts with ATP; the sequence is GSVAVGKS.

The protein belongs to the prokaryotic pantothenate kinase family.

The protein resides in the cytoplasm. It carries out the reaction (R)-pantothenate + ATP = (R)-4'-phosphopantothenate + ADP + H(+). The protein operates within cofactor biosynthesis; coenzyme A biosynthesis; CoA from (R)-pantothenate: step 1/5. The protein is Pantothenate kinase of Paenarthrobacter aurescens (strain TC1).